A 242-amino-acid polypeptide reads, in one-letter code: Biosynthetic peptidoglycan transglycosylase (242 aa).

Residues 19–39 traverse the membrane as a helical segment; it reads LMVVLAVFWAGGIALFSVAPV.

Belongs to the glycosyltransferase 51 family.

It is found in the cell inner membrane. It carries out the reaction [GlcNAc-(1-&gt;4)-Mur2Ac(oyl-L-Ala-gamma-D-Glu-L-Lys-D-Ala-D-Ala)](n)-di-trans,octa-cis-undecaprenyl diphosphate + beta-D-GlcNAc-(1-&gt;4)-Mur2Ac(oyl-L-Ala-gamma-D-Glu-L-Lys-D-Ala-D-Ala)-di-trans,octa-cis-undecaprenyl diphosphate = [GlcNAc-(1-&gt;4)-Mur2Ac(oyl-L-Ala-gamma-D-Glu-L-Lys-D-Ala-D-Ala)](n+1)-di-trans,octa-cis-undecaprenyl diphosphate + di-trans,octa-cis-undecaprenyl diphosphate + H(+). Its pathway is cell wall biogenesis; peptidoglycan biosynthesis. In terms of biological role, peptidoglycan polymerase that catalyzes glycan chain elongation from lipid-linked precursors. This is Biosynthetic peptidoglycan transglycosylase from Shigella boydii serotype 4 (strain Sb227).